The primary structure comprises 1094 residues: Potassium-transporting ATPase alpha chain 2 (1094 aa).

The span at 1 to 21 (MAGGAHRADRATGEERKEGGG) shows a compositional bias: basic and acidic residues. Positions 1-37 (MAGGAHRADRATGEERKEGGGRWRAPHSPSPPGPRGC) are disordered. The segment covering 28 to 37 (SPSPPGPRGC) has biased composition (pro residues). At 56-157 (RYCTLLLFQR…NALTPPKQTP (102 aa)) the chain is on the cytoplasmic side. A helical transmembrane segment spans residues 158–178 (EIIKFLKQMVGGFSILLWVGA). Topologically, residues 179 to 201 (VLCWIAFGIQYVSNPSASLDRVY) are lumenal. Residues 202–222 (LGTVLAVVVILTGIFAYYQEA) form a helical membrane-spanning segment. Residues 223-358 (KSTNIMASFC…NEKTPIAIEI (136 aa)) lie on the Cytoplasmic side of the membrane. Residues 286-305 (SSLTGESEPQSRSSGFTHEN) form a disordered region. The chain crosses the membrane as a helical span at residues 359–378 (EHFVHIVAGVAVSVGILFFI). The Lumenal segment spans residues 379–390 (IAVCMKYHVLDA). A helical transmembrane segment spans residues 391-408 (IIFLIAIIVANVPEGLLA). Residues 409 to 842 (TVTVALSLTA…EEGRLIFDNL (434 aa)) lie on the Cytoplasmic side of the membrane. The 4-aspartylphosphate intermediate role is filled by Asp446. Positions 787 and 791 each coordinate Mg(2+). The helical transmembrane segment at 843–862 (KKTIAYTLTKNIAELCPFLI) threads the bilayer. Topologically, residues 863–872 (YIILGLPLPI) are lumenal. Residues 873–893 (GTITLLFIDLGTDIIPSIALA) form a helical membrane-spanning segment. The Cytoplasmic portion of the chain corresponds to 894 to 913 (YEKAESDIMNRKPRHKKKDR). A helical transmembrane segment spans residues 914–936 (LVNQQLAVYSYLHIGLMQALGAF). The Lumenal segment spans residues 937 to 988 (LVYFTVYAQQGFRPTSLFHLRIAWDSDHLNDLEDNYGQEWTSYQRQYLEWTG). A helical membrane pass occupies residues 989–1008 (YTAFFVGIMVQQIADLIIRK). Topologically, residues 1009 to 1022 (TRKNSIFKQGLFRN) are cytoplasmic. A Phosphoserine; by PKA modification is found at Ser1013. The chain crosses the membrane as a helical span at residues 1023–1041 (KVIWVGIASQIIVALLLSY). Topologically, residues 1042 to 1056 (GLGSITALNFTMLKA) are lumenal. A helical membrane pass occupies residues 1057-1077 (QYWFVAVPHAILIWVYDEMRK). The Cytoplasmic segment spans residues 1078–1094 (LFIRLYPGSWWDKNMYY).

Belongs to the cation transport ATPase (P-type) (TC 3.A.3) family. Type IIC subfamily. The X(+)/K(+) ATPase pump is composed of a catalytic alpha subunit and an auxiliary non-catalytic beta subunit. The alpha subunit pairs with the beta subunit of gastric H(+)/K(+) ATPase ATP4B or the beta subunit of Na(+)/K(+) ATPases ATP1B1 and ATP1B3; this interaction is required for the formation of a functionally active pump and its targeting at the plasma membrane. In terms of tissue distribution, found in the skin, kidney, distal colon and brain. In the kidney it is found in the connecting tubule, cortical collecting duct and outer medullary collecting duct while in the brain it is specific to choroid plexus and cortex.

The protein resides in the apical cell membrane. The catalysed reaction is K(+)(out) + ATP + H2O + H(+)(in) = K(+)(in) + ADP + phosphate + 2 H(+)(out). It catalyses the reaction K(+)(out) + Na(+)(in) + ATP + H2O = K(+)(in) + Na(+)(out) + ADP + phosphate + H(+). Its function is as follows. The catalytic subunit of a H(+)/K(+) ATPase and/or Na(+)/K(+) ATPase pump which transports K(+) ions in exchange for Na(+) and/or H(+) ions across the apical membrane of epithelial cells. Uses ATP as an energy source to pump K(+) ions into the cell while transporting Na(+) and/or H(+) ions to the extracellular compartment. Involved in the maintenance of electrolyte homeostasis through K(+) ion absorption in kidney and colon. In the airway epithelium, may play a primary role in mucus acidification regulating its viscosity and clearance. The protein is Potassium-transporting ATPase alpha chain 2 (ATP12A) of Oryctolagus cuniculus (Rabbit).